The sequence spans 458 residues: N-acetylgalactosamine kinase (458 aa).

4 residues coordinate alpha-D-galactose: Arg43, Glu49, His50, and Asp52. ATP-binding residues include Gly143, Ser145, and Ser146. Residue Asp190 coordinates alpha-D-galactose. Catalysis depends on Asp190, which acts as the Proton acceptor. ATP-binding residues include Asn233 and Lys234.

The protein belongs to the GHMP kinase family. GalK subfamily. Monomer.

It catalyses the reaction N-acetyl-alpha-D-galactosamine + ATP = N-acetyl-alpha-D-galactosamine 1-phosphate + ADP + H(+). In terms of biological role, acts on GalNAc. Also acts as a galactokinase when galactose is present at high concentrations. The protein is N-acetylgalactosamine kinase (GALK2) of Pongo abelii (Sumatran orangutan).